The primary structure comprises 525 residues: Peptide chain release factor 3 (525 aa).

Residues 9 to 276 (AKRRTFAIIS…GFTRYAPAPQ (268 aa)) enclose the tr-type G domain. Residues 18-25 (SHPDAGKT), 86-90 (DTPGH), and 140-143 (NKFD) contribute to the GTP site.

The protein belongs to the TRAFAC class translation factor GTPase superfamily. Classic translation factor GTPase family. PrfC subfamily.

Its subcellular location is the cytoplasm. In terms of biological role, increases the formation of ribosomal termination complexes and stimulates activities of RF-1 and RF-2. It binds guanine nucleotides and has strong preference for UGA stop codons. It may interact directly with the ribosome. The stimulation of RF-1 and RF-2 is significantly reduced by GTP and GDP, but not by GMP. This Francisella tularensis subsp. tularensis (strain FSC 198) protein is Peptide chain release factor 3.